Reading from the N-terminus, the 273-residue chain is Transmembrane protein 202 (273 aa).

A run of 4 helical transmembrane segments spans residues 53 to 75, 121 to 141, 155 to 175, and 189 to 209; these read HIYI…IAMS, FFLI…SSWI, VSML…LFVA, and LLWT…AGII. The segment at 242-273 is disordered; sequence TTVSPAKDEGPRSEMESLSVREKNLPKSGLWW. Basic and acidic residues predominate over residues 247 to 266; the sequence is AKDEGPRSEMESLSVREKNL.

The protein localises to the membrane. In Homo sapiens (Human), this protein is Transmembrane protein 202 (TMEM202).